The primary structure comprises 127 residues: Flagellar hook-basal body complex protein FliE (127 aa).

It belongs to the FliE family.

It is found in the bacterial flagellum basal body. The chain is Flagellar hook-basal body complex protein FliE from Leptospira interrogans serogroup Icterohaemorrhagiae serovar copenhageni (strain Fiocruz L1-130).